Consider the following 249-residue polypeptide: Leucyl/phenylalanyl-tRNA--protein transferase (249 aa).

The protein belongs to the L/F-transferase family.

It is found in the cytoplasm. The enzyme catalyses N-terminal L-lysyl-[protein] + L-leucyl-tRNA(Leu) = N-terminal L-leucyl-L-lysyl-[protein] + tRNA(Leu) + H(+). It carries out the reaction N-terminal L-arginyl-[protein] + L-leucyl-tRNA(Leu) = N-terminal L-leucyl-L-arginyl-[protein] + tRNA(Leu) + H(+). It catalyses the reaction L-phenylalanyl-tRNA(Phe) + an N-terminal L-alpha-aminoacyl-[protein] = an N-terminal L-phenylalanyl-L-alpha-aminoacyl-[protein] + tRNA(Phe). Functionally, functions in the N-end rule pathway of protein degradation where it conjugates Leu, Phe and, less efficiently, Met from aminoacyl-tRNAs to the N-termini of proteins containing an N-terminal arginine or lysine. The chain is Leucyl/phenylalanyl-tRNA--protein transferase from Cupriavidus metallidurans (strain ATCC 43123 / DSM 2839 / NBRC 102507 / CH34) (Ralstonia metallidurans).